A 428-amino-acid polypeptide reads, in one-letter code: Maltoporin (428 aa).

The first 24 residues, 1 to 24 (MKSMRILPISLTIMAGLLSIEASA), serve as a signal peptide directing secretion.

It belongs to the porin LamB (TC 1.B.3) family. In terms of assembly, homotrimer formed of three 18-stranded antiparallel beta-barrels, containing three independent channels.

Its subcellular location is the cell outer membrane. It catalyses the reaction beta-maltose(in) = beta-maltose(out). Its function is as follows. Involved in the transport of maltose and maltodextrins. The polypeptide is Maltoporin (Photorhabdus laumondii subsp. laumondii (strain DSM 15139 / CIP 105565 / TT01) (Photorhabdus luminescens subsp. laumondii)).